A 95-amino-acid polypeptide reads, in one-letter code: Small ribosomal subunit protein bS6 (95 aa).

Belongs to the bacterial ribosomal protein bS6 family.

In terms of biological role, binds together with bS18 to 16S ribosomal RNA. The polypeptide is Small ribosomal subunit protein bS6 (Bacillus velezensis (strain DSM 23117 / BGSC 10A6 / LMG 26770 / FZB42) (Bacillus amyloliquefaciens subsp. plantarum)).